Reading from the N-terminus, the 252-residue chain is Nicotinamide/nicotinic acid mononucleotide adenylyltransferase 3 (252 aa).

2 residues coordinate NAD(+): Ser14 and Phe15. ATP is bound by residues His22 and Lys56. NAD(+)-binding residues include Trp90, Thr93, Gly135, and Asp137. Residue Lys140 participates in ATP binding. NAD(+) is bound by residues Leu147, Trp148, Arg167, and Asn198. 203-206 (TYIR) contributes to the ATP binding site.

This sequence belongs to the eukaryotic NMN adenylyltransferase family. As to quaternary structure, homotetramer. It depends on Mg(2+) as a cofactor. Expressed in lung and spleen with lower levels in placenta and kidney.

It localises to the mitochondrion. The catalysed reaction is beta-nicotinamide D-ribonucleotide + ATP + H(+) = diphosphate + NAD(+). It carries out the reaction nicotinate beta-D-ribonucleotide + ATP + H(+) = deamido-NAD(+) + diphosphate. The protein operates within cofactor biosynthesis; NAD(+) biosynthesis; NAD(+) from nicotinamide D-ribonucleotide: step 1/1. Its pathway is cofactor biosynthesis; NAD(+) biosynthesis; deamido-NAD(+) from nicotinate D-ribonucleotide: step 1/1. Activity is strongly inhibited by galotannin. Inhibited by P1-(adenosine-5')-P4-(nicotinic-acid-riboside-5')-tetraphosphate (Nap4AD). Functionally, catalyzes the formation of NAD(+) from nicotinamide mononucleotide (NMN) and ATP. Can also use the deamidated form; nicotinic acid mononucleotide (NaMN) as substrate with the same efficiency. Can use triazofurin monophosphate (TrMP) as substrate. Can also use GTP and ITP as nucleotide donors. Also catalyzes the reverse reaction, i.e. the pyrophosphorolytic cleavage of NAD(+). For the pyrophosphorolytic activity, can use NAD(+), NADH, NaAD, nicotinic acid adenine dinucleotide phosphate (NHD), nicotinamide guanine dinucleotide (NGD) as substrates. Fails to cleave phosphorylated dinucleotides NADP(+), NADPH and NaADP(+). Protects against axonal degeneration following injury. May be involved in the maintenance of axonal integrity. Also functions as a stress-response chaperone protein that prevents toxic aggregation of proteins; this function may be independent of its NAD(+) synthesis activity. The protein is Nicotinamide/nicotinic acid mononucleotide adenylyltransferase 3 of Homo sapiens (Human).